The sequence spans 1046 residues: Phospholipase D zeta 2 (1046 aa).

Residues 45-205 (PKAAIVSVSR…KEVCKFLEVS (161 aa)) form the PX domain. Positions 215–343 (SKMKEGYVTV…WVKAVDEAGC (129 aa)) constitute a PH domain. A PLD phosphodiesterase 1 domain is found at 472 to 499 (YLWSHHEKIVIVDYQVCFIGGLDLCFGR). Catalysis depends on residues His477, Lys479, and Asp484. The span at 653 to 667 (GRGDLKLDSGARQDP) shows a compositional bias: basic and acidic residues. The tract at residues 653–677 (GRGDLKLDSGARQDPGETSEESDLD) is disordered. The 28-residue stretch at 847 to 874 (SQIYVHSKLMIVDDRIAVIGSSNINDRS) folds into the PLD phosphodiesterase 2 domain. Active-site residues include His852, Lys854, and Asp859.

It belongs to the phospholipase D family. PXPH-PLD subfamily. Does not require Ca(2+) or any other cation for activity. serves as cofactor. As to expression, expressed in seedlings, roots, leaves, stems and flowers. Highest expression in roots. Detected only in the meristematic regions up to 4 days after germination and then at later stages in all tissues.

It catalyses the reaction a 1,2-diacyl-sn-glycero-3-phosphocholine + H2O = a 1,2-diacyl-sn-glycero-3-phosphate + choline + H(+). Functionally, hydrolyzes glycerol-phospholipids at the terminal phosphodiesteric bond to generate phosphatidic acids (PA). Phosphatidylcholine-selective. Regulates vesicle trafficking and auxin responses. Required for the normal cycling of PIN-2 containing vesicles. Contributes to the supply of inorganic phosphorus for cell metabolism and diacylglycerol moieties for galactolipid synthesis in phosphorus-starved roots. Involved in root elongation during phosphate limitation. The chain is Phospholipase D zeta 2 from Arabidopsis thaliana (Mouse-ear cress).